Reading from the N-terminus, the 217-residue chain is Very-long-chain (3R)-3-hydroxyacyl-CoA dehydratase PHS1 (217 aa).

Over 1-11 the chain is Cytoplasmic; sequence MSKKLASPLSF. The helical transmembrane segment at 12 to 29 threads the bilayer; that stretch reads LPLYNLLSAVGWSYLLYL. At 30-47 the chain is on the lumenal side; that stretch reads VISLYPKVGQPAFFYQTK. A helical membrane pass occupies residues 48 to 66; the sequence is NVATLVQCGAIIEIINSFL. The Cytoplasmic portion of the chain corresponds to 67-76; that stretch reads GVVRSPLLTT. A helical membrane pass occupies residues 77-94; the sequence is VAQVSSRLLVVLGIFQLL. At 95 to 99 the chain is on the lumenal side; it reads PNTSG. A helical membrane pass occupies residues 100-117; it reads VQSVVYISLLLAWSITEI. Topologically, residues 118-142 are cytoplasmic; that stretch reads VRYLYYFFMLVFKNGAPKILILLRY. A helical transmembrane segment spans residues 143-160; sequence NLFWILYPTGVASELRII. Catalysis depends on residues Y149 and E156. Over 161–178 the chain is Lumenal; sequence YCALNAAESQYSLLYKRI. Residues 179-196 form a helical membrane-spanning segment; the sequence is LIAAMLAYIPGFPMLFLH. At 197 to 217 the chain is on the cytoplasmic side; that stretch reads MVAQRKKVMKSLRSSFGKKLI. Residues 214-217 carry the Endoplasmic reticulum retention signal motif; it reads KKLI.

The protein belongs to the very long-chain fatty acids dehydratase HACD family.

The protein resides in the endoplasmic reticulum membrane. The protein localises to the vacuole membrane. It catalyses the reaction a very-long-chain (3R)-3-hydroxyacyl-CoA = a very-long-chain (2E)-enoyl-CoA + H2O. The catalysed reaction is (3R)-hydroxyeicosanoyl-CoA = (2E)-eicosenoyl-CoA + H2O. It carries out the reaction (3R)-hydroxydocosanoyl-CoA = (2E)-docosenoyl-CoA + H2O. The enzyme catalyses (3R)-hydroxyoctadecanoyl-CoA = (2E)-octadecenoyl-CoA + H2O. It catalyses the reaction (3R)-hydroxytetracosanoyl-CoA = (2E)-tetracosenoyl-CoA + H2O. The catalysed reaction is (3R)-hydroxyhexacosanoyl-CoA = (2E)-hexacosenoyl-CoA + H2O. It carries out the reaction (3R)-hydroxyhexadecanoyl-CoA = (2E)-hexadecenoyl-CoA + H2O. The protein operates within lipid metabolism; fatty acid biosynthesis. Catalyzes the third of the four reactions of the long-chain fatty acids elongation cycle. This endoplasmic reticulum-bound enzymatic process, allows the addition of two carbons to the chain of long- and very long-chain fatty acids/VLCFAs per cycle. This enzyme catalyzes the dehydration of the 3-hydroxyacyl-CoA intermediate into trans-2,3-enoyl-CoA, within each cycle of fatty acid elongation. Thereby, it participates in the production of VLCFAs of different chain lengths that are involved in multiple biological processes as precursors of membrane lipids and lipid mediators. In Saccharomyces cerevisiae (strain ATCC 204508 / S288c) (Baker's yeast), this protein is Very-long-chain (3R)-3-hydroxyacyl-CoA dehydratase PHS1 (PHS1).